Here is a 133-residue protein sequence, read N- to C-terminus: Small ribosomal subunit protein uS11 (133 aa).

The tract at residues 1–22 (MPPKTRGAVRKPRKKDKKNIAL) is disordered. Basic residues predominate over residues 7–17 (GAVRKPRKKDK).

The protein belongs to the universal ribosomal protein uS11 family. In terms of assembly, part of the 30S ribosomal subunit. Interacts with proteins S7 and S18. Binds to IF-3.

Functionally, located on the platform of the 30S subunit, it bridges several disparate RNA helices of the 16S rRNA. Forms part of the Shine-Dalgarno cleft in the 70S ribosome. In Renibacterium salmoninarum (strain ATCC 33209 / DSM 20767 / JCM 11484 / NBRC 15589 / NCIMB 2235), this protein is Small ribosomal subunit protein uS11.